The following is a 351-amino-acid chain: tRNA (guanine(26)-N(2))-dimethyltransferase (351 aa).

The Trm1 methyltransferase domain occupies 4 to 350; it reads VLRREGAVQF…AGYGEVKRAL (347 aa). Positions 39, 65, 83, 109, and 110 each coordinate S-adenosyl-L-methionine.

This sequence belongs to the class I-like SAM-binding methyltransferase superfamily. Trm1 family.

The enzyme catalyses guanosine(26) in tRNA + 2 S-adenosyl-L-methionine = N(2)-dimethylguanosine(26) in tRNA + 2 S-adenosyl-L-homocysteine + 2 H(+). Dimethylates a single guanine residue at position 26 of a number of tRNAs using S-adenosyl-L-methionine as donor of the methyl groups. This is tRNA (guanine(26)-N(2))-dimethyltransferase from Pyrobaculum neutrophilum (strain DSM 2338 / JCM 9278 / NBRC 100436 / V24Sta) (Thermoproteus neutrophilus).